Here is a 637-residue protein sequence, read N- to C-terminus: Biosynthetic arginine decarboxylase (637 aa).

An N6-(pyridoxal phosphate)lysine modification is found at lysine 101. 286–296 serves as a coordination point for substrate; sequence FDVGGGLAVDY.

Belongs to the Orn/Lys/Arg decarboxylase class-II family. SpeA subfamily. Mg(2+) serves as cofactor. It depends on pyridoxal 5'-phosphate as a cofactor.

The catalysed reaction is L-arginine + H(+) = agmatine + CO2. It functions in the pathway amine and polyamine biosynthesis; agmatine biosynthesis; agmatine from L-arginine: step 1/1. In terms of biological role, catalyzes the biosynthesis of agmatine from arginine. This chain is Biosynthetic arginine decarboxylase, found in Shewanella baltica (strain OS223).